Here is a 147-residue protein sequence, read N- to C-terminus: Interleukin-4 (147 aa).

The N-terminal stretch at 1–24 (MGLPAQLPVTLLCLLAGTAHFIQG) is a signal peptide. Cys48 and Cys88 are joined by a disulfide. A glycan (N-linked (GlcNAc...) asparagine) is linked at Asn62.

The protein belongs to the IL-4/IL-13 family.

It localises to the secreted. Functionally, participates in at least several B-cell activation processes as well as of other cell types. It is a costimulator of DNA-synthesis. It induces the expression of class II MHC molecules on resting B-cells. It enhances both secretion and cell surface expression of IgE and IgG1. It also regulates the expression of the low affinity Fc receptor for IgE (CD23) on both lymphocytes and monocytes. Positively regulates IL31RA expression in macrophages. Stimulates autophagy in dendritic cells by interfering with mTORC1 signaling and through the induction of RUFY4. This chain is Interleukin-4 (IL4), found in Oryctolagus cuniculus (Rabbit).